The chain runs to 450 residues: Signal recognition particle 54 kDa protein (450 aa).

GTP contacts are provided by residues 107 to 114 (GIQGSGKT), 188 to 192 (DTAGR), and 247 to 250 (TKLD).

It belongs to the GTP-binding SRP family. SRP54 subfamily. Part of the signal recognition particle protein translocation system, which is composed of SRP and FtsY. Archaeal SRP consists of a 7S RNA molecule of 300 nucleotides and two protein subunits: SRP54 and SRP19.

The protein resides in the cytoplasm. It carries out the reaction GTP + H2O = GDP + phosphate + H(+). In terms of biological role, involved in targeting and insertion of nascent membrane proteins into the cytoplasmic membrane. Binds to the hydrophobic signal sequence of the ribosome-nascent chain (RNC) as it emerges from the ribosomes. The SRP-RNC complex is then targeted to the cytoplasmic membrane where it interacts with the SRP receptor FtsY. The protein is Signal recognition particle 54 kDa protein of Methanococcus maripaludis (strain DSM 14266 / JCM 13030 / NBRC 101832 / S2 / LL).